Reading from the N-terminus, the 336-residue chain is Glyceraldehyde-3-phosphate dehydrogenase (336 aa).

NAD(+)-binding positions include 12-13, Asp-34, Arg-78, and Thr-121; that span reads RI. D-glyceraldehyde 3-phosphate-binding positions include 151–153, Thr-182, Arg-199, 212–213, and Arg-235; these read SCT and TG. The active-site Nucleophile is the Cys-152. Asn-316 contributes to the NAD(+) binding site.

This sequence belongs to the glyceraldehyde-3-phosphate dehydrogenase family. Homotetramer.

It localises to the cytoplasm. It carries out the reaction D-glyceraldehyde 3-phosphate + phosphate + NAD(+) = (2R)-3-phospho-glyceroyl phosphate + NADH + H(+). The protein operates within carbohydrate degradation; glycolysis; pyruvate from D-glyceraldehyde 3-phosphate: step 1/5. Catalyzes the oxidative phosphorylation of glyceraldehyde 3-phosphate (G3P) to 1,3-bisphosphoglycerate (BPG) using the cofactor NAD. The first reaction step involves the formation of a hemiacetal intermediate between G3P and a cysteine residue, and this hemiacetal intermediate is then oxidized to a thioester, with concomitant reduction of NAD to NADH. The reduced NADH is then exchanged with the second NAD, and the thioester is attacked by a nucleophilic inorganic phosphate to produce BPG. This Streptococcus pyogenes serotype M3 (strain ATCC BAA-595 / MGAS315) protein is Glyceraldehyde-3-phosphate dehydrogenase (gap).